The following is a 382-amino-acid chain: Lipid-A-disaccharide synthase (382 aa).

The protein belongs to the LpxB family.

The enzyme catalyses 2-N,3-O-bis[(3R)-3-hydroxytetradecanoyl]-alpha-D-glucosaminyl 1-phosphate + UDP-2-N,3-O-bis[(3R)-3-hydroxytetradecanoyl]-alpha-D-glucosamine = lipid A disaccharide (E. coli) + UDP + H(+). It catalyses the reaction a lipid X + a UDP-2-N,3-O-bis[(3R)-3-hydroxyacyl]-alpha-D-glucosamine = a lipid A disaccharide + UDP + H(+). It participates in glycolipid biosynthesis; lipid IV(A) biosynthesis; lipid IV(A) from (3R)-3-hydroxytetradecanoyl-[acyl-carrier-protein] and UDP-N-acetyl-alpha-D-glucosamine: step 5/6. Functionally, condensation of UDP-2,3-diacylglucosamine and 2,3-diacylglucosamine-1-phosphate to form lipid A disaccharide, a precursor of lipid A, a phosphorylated glycolipid that anchors the lipopolysaccharide to the outer membrane of the cell. This Escherichia coli O127:H6 (strain E2348/69 / EPEC) protein is Lipid-A-disaccharide synthase.